Here is a 255-residue protein sequence, read N- to C-terminus: tRNA-cytidine(32) 2-sulfurtransferase (255 aa).

The PP-loop motif signature appears at Ser-37–Ser-42. [4Fe-4S] cluster contacts are provided by Cys-112, Cys-115, and Cys-202.

This sequence belongs to the TtcA family. As to quaternary structure, homodimer. It depends on Mg(2+) as a cofactor. [4Fe-4S] cluster is required as a cofactor.

The protein resides in the cytoplasm. It carries out the reaction cytidine(32) in tRNA + S-sulfanyl-L-cysteinyl-[cysteine desulfurase] + AH2 + ATP = 2-thiocytidine(32) in tRNA + L-cysteinyl-[cysteine desulfurase] + A + AMP + diphosphate + H(+). It functions in the pathway tRNA modification. Catalyzes the ATP-dependent 2-thiolation of cytidine in position 32 of tRNA, to form 2-thiocytidine (s(2)C32). The sulfur atoms are provided by the cysteine/cysteine desulfurase (IscS) system. The sequence is that of tRNA-cytidine(32) 2-sulfurtransferase from Citrifermentans bemidjiense (strain ATCC BAA-1014 / DSM 16622 / JCM 12645 / Bem) (Geobacter bemidjiensis).